A 393-amino-acid polypeptide reads, in one-letter code: Bifunctional enzyme Fae/Hps (393 aa).

A formaldehyde-activating enzyme region spans residues 1-161 (MYLVGEALIG…YEKDRAAHGI (161 aa)). His17 functions as the Proton donor in the catalytic mechanism. Residues Asp19, Leu48, Lys66, Thr68, and Gln83 each contribute to the substrate site. The tract at residues 162–393 (MGFKVQRLWD…IDQFRIMTDF (232 aa)) is 3-hexulose-6-phosphate synthase.

It in the N-terminal section; belongs to the formaldehyde-activating enzyme family. In the C-terminal section; belongs to the HPS/KGPDC family. HPS subfamily.

The enzyme catalyses 5,6,7,8-tetrahydromethanopterin + formaldehyde = 5,10-methylenetetrahydromethanopterin + H2O. The catalysed reaction is D-ribulose 5-phosphate + formaldehyde = D-arabino-hex-3-ulose 6-phosphate. Its pathway is carbohydrate biosynthesis; D-ribose 5-phosphate biosynthesis. In terms of biological role, catalyzes the condensation of formaldehyde with tetrahydromethanopterin (H(4)MPT) to 5,10-methylenetetrahydromethanopterin. Catalyzes the reversible formation of ribulose-5-phosphate and formaldehyde from 3-hexulose-6-phosphate. This is Bifunctional enzyme Fae/Hps from Methanoregula boonei (strain DSM 21154 / JCM 14090 / 6A8).